Here is a 774-residue protein sequence, read N- to C-terminus: Lysyl oxidase homolog 2 (774 aa).

Positions 1–25 are cleaved as a signal peptide; sequence MERRGSSCLCRCLALLALLPTLSLA. SRCR domains follow at residues 58-159, 188-302, 326-425, and 435-544; these read LRLA…VVCS, IRAI…VSCV, VRLR…VRCN, and LRLN…VACS. 9 disulfide bridges follow: Cys-84–Cys-148, Cys-97–Cys-158, Cys-128–Cys-138, Cys-218–Cys-291, Cys-231–Cys-301, Cys-265–Cys-275, Cys-351–Cys-414, Cys-364–Cys-424, and Cys-395–Cys-405. N-linked (GlcNAc...) asparagine glycosylation occurs at Asn-288. The N-linked (GlcNAc...) asparagine glycan is linked to Asn-455. Cystine bridges form between Cys-464–Cys-530, Cys-477–Cys-543, and Cys-511–Cys-521. Residues 548–751 form a lysyl-oxidase like region; that stretch reads PDLVLNAEIV…WMYNCHIGGS (204 aa). The Ca(2+) site is built by Asp-549 and Leu-550. Disulfide bonds link Cys-573-Cys-625, Cys-579-Cys-695, Cys-657-Cys-673, and Cys-663-Cys-685. Positions 626, 628, and 630 each coordinate Cu cation. A glycan (N-linked (GlcNAc...) asparagine) is linked at Asn-644. The segment at residues 653–689 is a cross-link (lysine tyrosylquinone (Lys-Tyr)); the sequence is KASFCLEDTECEGDIQKSYECANFGEQGITMGCWDMY. Residue Tyr-689 is modified to 2',4',5'-topaquinone. Glu-722, Asp-724, Asn-727, and Asn-728 together coordinate Ca(2+). A disulfide bridge links Cys-732 with Cys-746.

This sequence belongs to the lysyl oxidase family. As to quaternary structure, component of some chromatin repressor complex. Interacts with SNAI1. Interacts with TAF10. Interacts with HSPA5. Interacts with EFEMP2. Cu cation is required as a cofactor. The cofactor is lysine tyrosylquinone residue. In terms of processing, the lysine tyrosylquinone cross-link (LTQ) is generated by condensation of the epsilon-amino group of a lysine with a topaquinone produced by oxidation of tyrosine. N-glycosylated. N-glycosylation on Asn-455 and Asn-644 may be essential for proper folding and secretion; may be composed of a fucosylated carbohydrates attached to a trimannose N-linked glycan core.

The protein localises to the secreted. It localises to the extracellular space. The protein resides in the extracellular matrix. Its subcellular location is the basement membrane. It is found in the nucleus. The protein localises to the chromosome. It localises to the endoplasmic reticulum. The catalysed reaction is L-lysyl-[protein] + O2 + H2O = (S)-2-amino-6-oxohexanoyl-[protein] + H2O2 + NH4(+). With respect to regulation, specifically inhibited by a mouse monoclonal antibody AB0023, inhibition occurs in a non-competitive manner. Its function is as follows. Mediates the post-translational oxidative deamination of lysine residues on target proteins leading to the formation of deaminated lysine (allysine). Acts as a transcription corepressor and specifically mediates deamination of trimethylated 'Lys-4' of histone H3 (H3K4me3), a specific tag for epigenetic transcriptional activation. Shows no activity against histone H3 when it is trimethylated on 'Lys-9' (H3K9me3) or 'Lys-27' (H3K27me3) or when 'Lys-4' is monomethylated (H3K4me1) or dimethylated (H3K4me2). Also mediates deamination of methylated TAF10, a member of the transcription factor IID (TFIID) complex, which induces release of TAF10 from promoters, leading to inhibition of TFIID-dependent transcription. LOXL2-mediated deamination of TAF10 results in transcriptional repression of genes required for embryonic stem cell pluripotency including POU5F1/OCT4, NANOG, KLF4 and SOX2. Involved in epithelial to mesenchymal transition (EMT) via interaction with SNAI1 and participates in repression of E-cadherin CDH1, probably by mediating deamination of histone H3. During EMT, involved with SNAI1 in negatively regulating pericentromeric heterochromatin transcription. SNAI1 recruits LOXL2 to pericentromeric regions to oxidize histone H3 and repress transcription which leads to release of heterochromatin component CBX5/HP1A, enabling chromatin reorganization and acquisition of mesenchymal traits. Interacts with the endoplasmic reticulum protein HSPA5 which activates the IRE1-XBP1 pathway of the unfolded protein response, leading to expression of several transcription factors involved in EMT and subsequent EMT induction. When secreted into the extracellular matrix, promotes cross-linking of extracellular matrix proteins by mediating oxidative deamination of peptidyl lysine residues in precursors to fibrous collagen and elastin. Acts as a regulator of sprouting angiogenesis, probably via collagen IV scaffolding. Acts as a regulator of chondrocyte differentiation, probably by regulating expression of factors that control chondrocyte differentiation. In Bos taurus (Bovine), this protein is Lysyl oxidase homolog 2 (LOXL2).